Here is a 258-residue protein sequence, read N- to C-terminus: Membrane-associated protein Vipp1 (258 aa).

A disordered region spans residues 217–258 (MLPPATPVTQAQLPPQQETTPAKSNEVVDAELDSLRKQLDQL). Over residues 223-239 (PVTQAQLPPQQETTPAK) the composition is skewed to polar residues. Residues 249-258 (DSLRKQLDQL) are compositionally biased toward basic and acidic residues.

The protein belongs to the PspA/Vipp/IM30 family. In terms of assembly, polymerizes to form rings, filaments and ribbons. Rings are formed by stacked rungs that tilt to give a dome-shaped curvature. Rings form with symmetries ranging from C11 (55 subunits) to C17 (119 subunits).

Its subcellular location is the cell inner membrane. Its function is as follows. A membrane remodeling protein capable of forming rings and/or filaments on membranes, which then curve and tubulate the bilayer. Rings will form on liposomes, altering their positive curvature so the lipid bilayer is remodeled into a negative curve as the membrane enters the ring. Ring stacks of varying lengths can be seen joining isolated liposomes. A lipid monolayer can be drawn into the center of the rings. Required for thylakoid formation. This is Membrane-associated protein Vipp1 from Nostoc punctiforme (strain ATCC 29133 / PCC 73102).